The primary structure comprises 444 residues: ATP-dependent 6-phosphofructokinase 2 (444 aa).

Serine 55 carries the post-translational modification Phosphoserine. ATP-binding positions include glycine 86, 149 to 150, and 174 to 177; these read RG and GDGT. Aspartate 175 is a binding site for Mg(2+). Substrate is bound by residues 203–205, 248–250, glutamate 304, and 362–365; these read TVD, MGR, and YMIR. Residue aspartate 205 is the Proton acceptor of the active site.

Belongs to the phosphofructokinase type A (PFKA) family. PPi-dependent PFK group II subfamily. Atypical ATP-dependent clade 'X' sub-subfamily. As to quaternary structure, homotetramer. It depends on Mg(2+) as a cofactor. Mostly expressed in roots and stems.

It is found in the cytoplasm. The catalysed reaction is beta-D-fructose 6-phosphate + ATP = beta-D-fructose 1,6-bisphosphate + ADP + H(+). Its pathway is carbohydrate degradation; glycolysis; D-glyceraldehyde 3-phosphate and glycerone phosphate from D-glucose: step 3/4. Allosterically activated by AMP. Its function is as follows. Catalyzes the phosphorylation of D-fructose 6-phosphate to fructose 1,6-bisphosphate by ATP, the first committing step of glycolysis. This Arabidopsis thaliana (Mouse-ear cress) protein is ATP-dependent 6-phosphofructokinase 2.